The sequence spans 237 residues: Large ribosomal subunit protein uL1 (237 aa).

This sequence belongs to the universal ribosomal protein uL1 family. Part of the 50S ribosomal subunit.

Functionally, binds directly to 23S rRNA. The L1 stalk is quite mobile in the ribosome, and is involved in E site tRNA release. In terms of biological role, protein L1 is also a translational repressor protein, it controls the translation of the L11 operon by binding to its mRNA. The protein is Large ribosomal subunit protein uL1 of Myxococcus xanthus (strain DK1622).